The following is a 776-amino-acid chain: Protein translocase subunit SecA 2 (776 aa).

Residues glutamine 80, 98-102 (GEGKT), and aspartate 486 contribute to the ATP site.

The protein belongs to the SecA family. Monomer and homodimer. Part of the essential Sec protein translocation apparatus which comprises SecA, SecYEG and auxiliary proteins SecDF. Other proteins may also be involved.

It is found in the cell membrane. The protein resides in the cytoplasm. It carries out the reaction ATP + H2O + cellular proteinSide 1 = ADP + phosphate + cellular proteinSide 2.. Part of the Sec protein translocase complex. Interacts with the SecYEG preprotein conducting channel. Has a central role in coupling the hydrolysis of ATP to the transfer of proteins into and across the cell membrane, serving as an ATP-driven molecular motor driving the stepwise translocation of polypeptide chains across the membrane. This is Protein translocase subunit SecA 2 from Listeria welshimeri serovar 6b (strain ATCC 35897 / DSM 20650 / CCUG 15529 / CIP 8149 / NCTC 11857 / SLCC 5334 / V8).